A 150-amino-acid chain; its full sequence is Large ribosomal subunit protein uL11 (150 aa).

It belongs to the universal ribosomal protein uL11 family. As to quaternary structure, part of the ribosomal stalk of the 50S ribosomal subunit. Interacts with L10 and the large rRNA to form the base of the stalk. L10 forms an elongated spine to which L12 dimers bind in a sequential fashion forming a multimeric L10(L12)X complex. In terms of processing, one or more lysine residues are methylated.

Its function is as follows. Forms part of the ribosomal stalk which helps the ribosome interact with GTP-bound translation factors. The protein is Large ribosomal subunit protein uL11 of Jannaschia sp. (strain CCS1).